The chain runs to 1231 residues: RNA-binding protein 33 (1231 aa).

The segment covering 1 to 13 has biased composition (gly residues); sequence MAAALGAGGGAGA. Disordered stretches follow at residues 1–168 and 219–261; these read MAAA…EEEQ and SQVA…FKTE. An N-acetylalanine modification is found at alanine 2. Residues 20–36 show a composition bias toward basic and acidic residues; it reads QFDKPGAERSWRRRAAD. A compositionally biased stretch (acidic residues) spans 37–49; sequence EDWDSELEDDLLG. Serine 41 bears the Phosphoserine mark. Polar residues predominate over residues 82–108; it reads FSSQGVTISLNTTSGIVTSFELSDNTN. Composition is skewed to acidic residues over residues 112–124 and 153–168; these read GEQE…GDDE and LTED…EEEQ. Residues 224 to 240 show a composition bias toward basic and acidic residues; that stretch reads ETHEGGMETLELQKDIK. A compositionally biased stretch (acidic residues) spans 241 to 252; the sequence is EESDEEDDDDEE. A phosphoserine mark is found at serine 243 and serine 271. Disordered regions lie at residues 297–436 and 452–761; these read FEER…KNIH and PLLP…NLRE. The segment covering 305-316 has biased composition (basic residues); the sequence is KQGRYGSRRGGR. Residues 327 to 344 show a composition bias toward basic and acidic residues; it reads GDQRRDNSERGRMKEHRP. Residues 360 to 379 are compositionally biased toward pro residues; sequence LIPPPQPQPPPPPPPPPPQQ. A compositionally biased stretch (low complexity) spans 380–398; the sequence is QPIRSLFQQQQLQPLLPLQ. Over residues 469-483 the composition is skewed to pro residues; that stretch reads FPGPPEFPQHTPGPV. Asymmetric dimethylarginine is present on arginine 520. 4 stretches are compositionally biased toward pro residues: residues 531 to 540, 604 to 618, 632 to 647, and 661 to 682; these read SPPPPPPPPT, FIPP…PGQP, LHPP…PQPQ, and PLQP…PPQH. Polar residues-rich tracts occupy residues 713 to 728 and 736 to 759; these read QTAQ…QCTP and AASQ…NSNL. 2 positions are modified to phosphoserine: serine 792 and serine 816. Disordered stretches follow at residues 796–840, 876–932, and 998–1080; these read RAVV…ETRL, ERLA…FPGA, and ETPH…MRQQ. Residues 820–829 show a composition bias toward basic and acidic residues; the sequence is QPKEEAKPEA. Residues 840–891 adopt a coiled-coil conformation; it reads LYRLKIEEQKRLREEILKQKELRRQQQAGARKKELLERLAQQQQQQQQQQHQ. Over residues 880–901 the composition is skewed to low complexity; that stretch reads QQQQQQQQQQHQPQQQQQQPQQ. Serine 1002 and serine 1010 each carry phosphoserine. Lysine 1019 is covalently cross-linked (Glycyl lysine isopeptide (Lys-Gly) (interchain with G-Cter in SUMO2)). Phosphoserine occurs at positions 1032 and 1051.

In terms of assembly, associates with the NXF1-NXT1 RNA export complex. Interacts with ALKBH5; facilitating ALKBH5 recruitment to m6A-containing transcripts. Interacts with SENP1; promoting ALKBH5 deSUMOylation and subsequent activation.

The protein localises to the nucleus. Its subcellular location is the cytoplasm. RNA reader protein, which recognizes and binds specific RNAs, thereby regulating RNA metabolic processes, such as mRNA export, mRNA stability and/or translation. Binds a subset of intronless RNAs containing GC-rich elements, such as NORAD, and promotes their nuclear export by recruiting target RNAs to components of the NXF1-NXT1 RNA export machinery. Specifically recognizes and binds N6-methyladenosine (m6A)-containing mRNAs, promoting their demethylation by ALKBH5. Acts as an molecular adapter, which (1) promotes ALKBH5 recruitment to m6A-containing transcripts and (2) activates ALKBH5 demethylase activity by recruiting SENP1, leading to ALKBH5 deSUMOylation and subsequent activation. The chain is RNA-binding protein 33 from Mus musculus (Mouse).